The sequence spans 230 residues: MKRGKKYLESLKLYDKTQQYSSDEAIDIVLKTAKANFDETIDLAVRLGVDPRHADQQVRGTVVLPHGTGKSVKVLVFAKGEKAKEAEAAGADYVGAEELVAKIQNENWFDYDVVVATPDMMGVVGRLGKILGPKGLMPNPKSGTVTFDLEKAIKEIKAGKIEYRVDKAGIIHVPIGKKSFGKEKLLENFRAVMDAIIKSKPAAAKGQYIKSVVLSSTMGPGVKVNPLKIF.

This sequence belongs to the universal ribosomal protein uL1 family. In terms of assembly, part of the 50S ribosomal subunit.

In terms of biological role, binds directly to 23S rRNA. The L1 stalk is quite mobile in the ribosome, and is involved in E site tRNA release. Functionally, protein L1 is also a translational repressor protein, it controls the translation of the L11 operon by binding to its mRNA. This is Large ribosomal subunit protein uL1 from Thermoanaerobacter sp. (strain X514).